Reading from the N-terminus, the 427-residue chain is Adenylosuccinate synthetase (427 aa).

Residues Gly11–Lys17 and Gly39–Thr41 contribute to the GTP site. Catalysis depends on Asp12, which acts as the Proton acceptor. Asp12 and Gly39 together coordinate Mg(2+). IMP-binding positions include Asp12–Lys15, Asn37–His40, Thr132, Arg146, Gln223, Thr238, and Arg302. His40 acts as the Proton donor in catalysis. Thr298 to Arg304 contacts substrate. Residues Arg304, Lys330–Asp332, and Gly412–Gly414 each bind GTP.

This sequence belongs to the adenylosuccinate synthetase family. Homodimer. The cofactor is Mg(2+).

It localises to the cytoplasm. The catalysed reaction is IMP + L-aspartate + GTP = N(6)-(1,2-dicarboxyethyl)-AMP + GDP + phosphate + 2 H(+). It functions in the pathway purine metabolism; AMP biosynthesis via de novo pathway; AMP from IMP: step 1/2. Its function is as follows. Plays an important role in the de novo pathway and in the salvage pathway of purine nucleotide biosynthesis. Catalyzes the first committed step in the biosynthesis of AMP from IMP. The protein is Adenylosuccinate synthetase (purA) of Dictyostelium discoideum (Social amoeba).